Reading from the N-terminus, the 71-residue chain is Exodeoxyribonuclease 7 small subunit (71 aa).

It belongs to the XseB family. In terms of assembly, heterooligomer composed of large and small subunits.

It is found in the cytoplasm. The catalysed reaction is Exonucleolytic cleavage in either 5'- to 3'- or 3'- to 5'-direction to yield nucleoside 5'-phosphates.. In terms of biological role, bidirectionally degrades single-stranded DNA into large acid-insoluble oligonucleotides, which are then degraded further into small acid-soluble oligonucleotides. The chain is Exodeoxyribonuclease 7 small subunit from Streptococcus suis (strain 98HAH33).